The sequence spans 588 residues: Progranulin (588 aa).

Positions 1–17 (MWILVSWLALVARLVAG) are cleaved as a signal peptide. N-linked (GlcNAc...) asparagine glycosylation is present at N38. Cystine bridges form between C125/C138, C132/C148, C281/C293, C287/C303, C294/C311, C304/C318, C312/C325, C319/C332, C363/C375, C369/C385, C394/C407, and C401/C413. Residue N372 is glycosylated (N-linked (GlcNAc...) asparagine). N-linked (GlcNAc...) asparagine glycosylation occurs at N525.

The protein belongs to the granulin family. Progranulin is secreted as a homodimer. Interacts with SLPI; interaction protects progranulin from proteolysis. Interacts (via region corresponding to granulin-7 peptide) with CTSD; stabilizes CTSD and increases its proteolytic activity. Interacts (via region corresponding to granulin-7 peptide) with SORT1; this interaction mediates endocytosis and lysosome delivery of progranulin; interaction occurs at the neuronal cell surface in a stressed nervous system. Interacts with PSAP; facilitates lysosomal delivery of progranulin from the extracellular space and the biosynthetic pathway. Forms a complex with PSAP and M6PR; PSAP bridges the binding between progranulin and M6PR. Forms a complex with PSAP and SORT1; progranulin bridges the interaction between PSAP and SORT1; facilitates lysosomal targeting of PSAP via SORT1; interaction enhances PSAP uptake in primary cortical neurons. Interacts (via regions corresponding to granulin-2 and granulin-7 peptides) with GBA1; this interaction prevents aggregation of GBA1-SCARB2 complex via interaction with HSPA1A upon stress. Interacts (via region corresponding to granulin-7 peptide) with HSPA1A; mediates recruitment of HSPA1A to GBA1 and prevents GBA1 aggregation in response to stress. In terms of processing, cleaved by ELANE; proteolysis is blocked by SLPI and is concentration- and time-dependent and induces CXCL8/IL-8 production; granulin-3 and granulin-4 are resistant to ELANE. Cleaved by CTSL in lysosome thus regulating the maturation and turnover of progranulin within the lysosome. In terms of tissue distribution, ubiquitous; most abundant in the spleen and several tissues of endocrine significance.

The protein localises to the secreted. It is found in the lysosome. In terms of biological role, secreted protein that acts as a key regulator of lysosomal function and as a growth factor involved in inflammation, wound healing and cell proliferation. Regulates protein trafficking to lysosomes, and also the activity of lysosomal enzymes. Also facilitates the acidification of lysosomes, causing degradation of mature CTSD by CTSB. In addition, functions as a wound-related growth factor that acts directly on dermal fibroblasts and endothelial cells to promote division, migration and the formation of capillary-like tubule structures. Also promotes epithelial cell proliferation by blocking TNF-mediated neutrophil activation preventing release of oxidants and proteases. Moreover, modulates inflammation in neurons by preserving neurons survival, axonal outgrowth and neuronal integrity. Its function is as follows. Inhibits epithelial cell proliferation and induces epithelial cells to secrete IL-8. Stabilizes CTSD through interaction with CTSD leading to maintain its aspartic-type peptidase activity. The sequence is that of Progranulin (Grn) from Rattus norvegicus (Rat).